We begin with the raw amino-acid sequence, 328 residues long: uncharacterized protein (328 aa).

Positions 72-91 (ALQIRDKFNLQRVIIVPDGE) form a DNA-binding region, H-T-H motif.

Belongs to the SorC transcriptional regulatory family.

This is an uncharacterized protein from Escherichia coli (strain K12).